We begin with the raw amino-acid sequence, 2105 residues long: Genome polyprotein (2105 aa).

Residues 63–250 (APIGFKAHSH…EQNLANSKWP (188 aa)) enclose the Alphavirus-like MT domain. The span at 552–563 (EAATRVEDKAPH) shows a compositional bias: basic and acidic residues. Residues 552-575 (EAATRVEDKAPHEPSCSNLSTEDG) form a disordered region. The (+)RNA virus helicase ATP-binding domain maps to 753-929 (FDPNFCKEVV…MIKTIKHKYL (177 aa)). Residue 781–788 (GFAGSGKT) participates in ATP binding. A (+)RNA virus helicase C-terminal domain is found at 930–1067 (LQGYRFGEWF…EKKRIPMERI (138 aa)). A RdRp catalytic domain is found at 1358–1466 (GFSIESDYTA…LSSLKRRRGE (109 aa)). Residues 1585-1868 (WQLSMSTTSS…SQRGLKDLGK (284 aa)) are V-region. Disordered stretches follow at residues 1832–1862 (TRSGGRALSLPKGGQTQGQKKREDLGPSQRG) and 1960–1980 (TTTPKEGETEEQKKAREGSSG). Basic and acidic residues-rich tracts occupy residues 1851 to 1862 (KKREDLGPSQRG) and 1964 to 1980 (KEGETEEQKKAREGSSG).

Post-translationally, the N-terminus of the coat protein is blocked.

The protein localises to the virion. The catalysed reaction is RNA(n) + a ribonucleoside 5'-triphosphate = RNA(n+1) + diphosphate. The enzyme catalyses ATP + H2O = ADP + phosphate + H(+). Replicates genomic RNA, and might as well transcribe a subgenomic RNA coding for coat protein. In terms of biological role, coat protein: encapsidates the viral genome. Forms particles of very flexuous filaments, 619 nm long and 12 nm in width, with obvious cross-banding, helical symmetry and a pitch of c. 3.8 nm. Synthesis remains unclear: either by cleavage of the ORF1 polyprotein, or by translation of a subgenomic RNA. The sequence is that of Genome polyprotein from Malus sylvestris (European crab apple).